The sequence spans 172 residues: Keratin, high-sulfur matrix protein, B2A (172 aa).

Residue A2 is modified to N-acetylalanine. 5 repeats span residues 27-36 (PTCCQTSCCQ), 37-46 (PTSIQTSCCQ), 47-56 (PISIQTSCCQ), 57-66 (PTSIQTSCCQ), and 67-76 (PTCLQTSGCE).

In terms of biological role, the keratin products of mammalian epidermal derivatives such as wool and hair consist of microfibrils embedded in a rigid matrix of other proteins. The matrix proteins include the high-sulfur and high-tyrosine keratins, having molecular weights of 6-20 kDa, whereas the microfibrils contain the larger, low-sulfur keratins (40-56 kDa). In Ovis aries (Sheep), this protein is Keratin, high-sulfur matrix protein, B2A.